We begin with the raw amino-acid sequence, 363 residues long: Chorismate synthase (363 aa).

Arginine 48 is a binding site for NADP(+). FMN-binding positions include 125–127, 238–239, glycine 278, 293–297, and arginine 319; these read RSS, NA, and KPTAS.

Belongs to the chorismate synthase family. As to quaternary structure, homotetramer. FMNH2 serves as cofactor.

It carries out the reaction 5-O-(1-carboxyvinyl)-3-phosphoshikimate = chorismate + phosphate. Its pathway is metabolic intermediate biosynthesis; chorismate biosynthesis; chorismate from D-erythrose 4-phosphate and phosphoenolpyruvate: step 7/7. Functionally, catalyzes the anti-1,4-elimination of the C-3 phosphate and the C-6 proR hydrogen from 5-enolpyruvylshikimate-3-phosphate (EPSP) to yield chorismate, which is the branch point compound that serves as the starting substrate for the three terminal pathways of aromatic amino acid biosynthesis. This reaction introduces a second double bond into the aromatic ring system. This is Chorismate synthase from Acinetobacter baumannii (strain AB0057).